Consider the following 161-residue polypeptide: MPRAGRAPAEGGPAPGTRSSRCLRPRPLAWRRLVPNFGAWAPRKGAARVGRPVLSPRTSGAAGEPTCGAGSPGTLEEGVASGRTRRRTQSAGEVAKCRWGLGQEPLCPRGAVLLNSFSPPAWPQFPPALRLRALAWPQPRGPACGSTAQWPPRGDPTWRIS.

Positions 1–16 are enriched in low complexity; it reads MPRAGRAPAEGGPAPG. Disordered regions lie at residues 1-23, 50-91, and 140-161; these read MPRAGRAPAEGGPAPGTRSSRCL, GRPV…TQSA, and RGPACGSTAQWPPRGDPTWRIS.

This is an uncharacterized protein from Homo sapiens (Human).